The primary structure comprises 444 residues: tRNA-2-methylthio-N(6)-dimethylallyladenosine synthase (444 aa).

In terms of domain architecture, MTTase N-terminal spans 7-121 (KTFHVKSFGC…LPELIARAER (115 aa)). C16, C52, C84, C158, C162, and C165 together coordinate [4Fe-4S] cluster. The region spanning 144 to 376 (GNQRPTAFLT…QALLNEQQQA (233 aa)) is the Radical SAM core domain. Residues 379-441 (EATVGRTTRL…PNSLGAEPLM (63 aa)) form the TRAM domain.

The protein belongs to the methylthiotransferase family. MiaB subfamily. Monomer. Requires [4Fe-4S] cluster as cofactor.

The protein localises to the cytoplasm. The catalysed reaction is N(6)-dimethylallyladenosine(37) in tRNA + (sulfur carrier)-SH + AH2 + 2 S-adenosyl-L-methionine = 2-methylsulfanyl-N(6)-dimethylallyladenosine(37) in tRNA + (sulfur carrier)-H + 5'-deoxyadenosine + L-methionine + A + S-adenosyl-L-homocysteine + 2 H(+). Its function is as follows. Catalyzes the methylthiolation of N6-(dimethylallyl)adenosine (i(6)A), leading to the formation of 2-methylthio-N6-(dimethylallyl)adenosine (ms(2)i(6)A) at position 37 in tRNAs that read codons beginning with uridine. This Sphingopyxis alaskensis (strain DSM 13593 / LMG 18877 / RB2256) (Sphingomonas alaskensis) protein is tRNA-2-methylthio-N(6)-dimethylallyladenosine synthase.